A 311-amino-acid chain; its full sequence is Transcription factor bHLH145 (311 aa).

The region spanning 253–302 is the bHLH domain; the sequence is FLKRSKLSSNKIGEEKIFETVSLLRSVVPGEELVDPILVIDRAIDYLKSL.

Homodimer.

It is found in the nucleus. This Arabidopsis thaliana (Mouse-ear cress) protein is Transcription factor bHLH145 (BHLH145).